Reading from the N-terminus, the 1630-residue chain is Merozoite surface protein 1 (1630 aa).

Residues 1–19 form the signal peptide; sequence MKIIFFLCSFLFFIINTQC. The interval 60–113 is disordered; the sequence is TKGASAQSGTSGTSGTSGPSGPSGTSPSSRSNTLPRSNTSSGASPPADASDSDA. The interval 67–84 is tripeptide SG(TP) repeat; that stretch reads SGTSGTSGTSGPSGPSGT. Residues 67-88 show a composition bias toward low complexity; that stretch reads SGTSGTSGTSGPSGPSGTSPSS. Residues 89–98 show a composition bias toward polar residues; sequence RSNTLPRSNT. Residue Asn-97 is glycosylated (N-linked (GlcNAc...) asparagine). The segment covering 99–108 has biased composition (low complexity); the sequence is SSGASPPADA. Asn-259 carries an N-linked (GlcNAc...) asparagine glycan. The disordered stretch occupies residues 680 to 755; the sequence is KKNIKTEGQS…VPTPPAPVNN (76 aa). Composition is skewed to polar residues over residues 685–695 and 702–713; these read TEGQSDNSEPS and GQATTKPGQQAG. The segment covering 721–732 has biased composition (low complexity); it reads VQAQAQEQKQAQ. N-linked (GlcNAc...) asparagine glycosylation is found at Asn-755, Asn-759, Asn-774, and Asn-835. Residues 884–906 are disordered; that stretch reads SMQPLSLTPQDKPEVSANDDTSH. 5 N-linked (GlcNAc...) asparagine glycosylation sites follow: Asn-911, Asn-955, Asn-1049, Asn-1156, and Asn-1165. Residues 993-1107 are required for binding to host erythrocyte cell membrane; it reads QLSFDLYNKY…EESIQTEDNY (115 aa). Polar residues predominate over residues 1190 to 1203; the sequence is VSESGSDTLEQSQP. The segment at 1190-1220 is disordered; it reads VSESGSDTLEQSQPKKPASTHVGAESNTITT. Asn-1436 and Asn-1517 each carry an N-linked (GlcNAc...) asparagine glycan. EGF-like domains are found at residues 1521 to 1561 and 1562 to 1610; these read HQCV…VENP and NPTC…FCSS. 6 cysteine pairs are disulfide-bonded: Cys-1523-Cys-1534, Cys-1528-Cys-1544, Cys-1546-Cys-1557, Cys-1565-Cys-1578, Cys-1572-Cys-1592, and Cys-1594-Cys-1608. Residue Ser-1609 is the site of GPI-anchor amidated serine attachment. Positions 1610–1630 are cleaved as a propeptide — removed in mature form; that stretch reads SSNFLGISFLLILMLILYSFI.

In terms of assembly, forms a complex composed of subunits p83, p30, p38, and p42 which remain non-covalently associated; the complex is formed at the merozoite surface prior to egress from host erythrocytes. Forms a complex composed of processed MSP1 subunits, MSP6 subunit p36 and MSP7; the complex is formed at the merozoite surface prior to egress from host erythrocytes. Within the complex, interacts (via subunit p38) with MSP6 subunit p36 and (via subunits p83, p30 and p38) with MSP7 (via subunit p22). Forms a complex composed of MSP1, MSP6, DBLMSP1 and DBLMSP2. Within the complex, interacts (via subunit p38) with DBLMSP1 and DBLMSP2. Forms a complex composed of MSP1, and rhoptry proteins RhopH3, RAP1 and CLAG9/RhopH3. Within the complex, interacts (via subunits p42 and p19) with RhopH3 (via C-terminus). Forms a complex composed of MSP1, MSP6, MSP7, MSP9 and MSP3; within the complex, MSP6 and MSP9 mediate the binding to the host erythrocyte. Interacts (via subunits p19 and p42) with MSP9; the interaction is direct; MSP1 subunits p19 or p42, and MSP9 form a co-ligand complex that interacts with host SLC4A1/Band 3 protein. May interact with PFD6. Interacts with host spectrin. As to quaternary structure, interacts with host glycophorin GYPA in a sialic acid-independent manner. Interacts with host proinflammatory cytokine S100P; the interaction blocks S100P inflammatory and chemotactic activities. In terms of assembly, interacts with host SLC4A1/Band 3 (via 5ABC region) on the host erythrocyte surface in a sialic acid-independent manner. In terms of processing, the p190 precursor is cleaved by SUB1 prior to merozoite egress into 4 subunits p83, p30, p38, and p42 which remain non-covalently associated. SUB1-mediated proteolytic cleavage occurs in an orderly manner; the first cleavage occurs at the p83/p30 site, followed by cleavage at the p30/p38 site, the last cleavage occurs at the p38/p42 site. The order of cleavage is essential for parasite viability. SUB1-mediated processing is essential for merozoite egress. In a second processing step during erythrocyte invasion, p42 is cleaved by SUB2 into p33 and p19; the latter remains attached to the merozoite surface via its GPI-anchor and stays on the surface during the subsequent ring stage.

It localises to the cell membrane. Its subcellular location is the secreted. The protein localises to the vacuole membrane. Its function is as follows. During the asexual blood stage, involved in merozoite egress from host erythrocytes possibly via its interaction with the host cytoskeleton protein spectrin resulting in the destabilization of the host cytoskeleton and thus leading to erythrocyte cell membrane rupture. Involved in the binding to host erythrocytes and is required for host erythrocyte invasion. By binding to host proinflammatory cytokine S100P may interfere with host immune responses. In terms of biological role, involved in merozoite invasion of host erythrocytes. May play a role in the biogenesis and/or function of the food vacuole during the intraerythrocytic development. The sequence is that of Merozoite surface protein 1 from Plasmodium falciparum (isolate K1 / Thailand).